The primary structure comprises 139 residues: Large ribosomal subunit protein uL16 (139 aa).

Residues 1-21 (MLMPKRVQYRKTQRGRMKGNA) are disordered. The segment covering 7–17 (VQYRKTQRGRM) has biased composition (basic residues).

The protein belongs to the universal ribosomal protein uL16 family. In terms of assembly, part of the 50S ribosomal subunit.

Functionally, binds 23S rRNA and is also seen to make contacts with the A and possibly P site tRNAs. This is Large ribosomal subunit protein uL16 from Chlorobaculum tepidum (strain ATCC 49652 / DSM 12025 / NBRC 103806 / TLS) (Chlorobium tepidum).